The sequence spans 511 residues: GMP synthase [glutamine-hydrolyzing] (511 aa).

The Glutamine amidotransferase type-1 domain occupies 5–195; the sequence is PIVVLDFGSQ…AKHICGCEST (191 aa). C82 serves as the catalytic Nucleophile. Active-site residues include H169 and E171. The GMPS ATP-PPase domain occupies 196-386; the sequence is WNMGSFAKEQ…LGLPKSMISR (191 aa). 223-229 contacts ATP; that stretch reads SGGVDSS.

As to quaternary structure, homodimer.

The catalysed reaction is XMP + L-glutamine + ATP + H2O = GMP + L-glutamate + AMP + diphosphate + 2 H(+). It functions in the pathway purine metabolism; GMP biosynthesis; GMP from XMP (L-Gln route): step 1/1. In terms of biological role, catalyzes the synthesis of GMP from XMP. The protein is GMP synthase [glutamine-hydrolyzing] of Aliarcobacter butzleri (strain RM4018) (Arcobacter butzleri).